The chain runs to 142 residues: Large ribosomal subunit protein uL11 (142 aa).

It belongs to the universal ribosomal protein uL11 family. Part of the ribosomal stalk of the 50S ribosomal subunit. Interacts with L10 and the large rRNA to form the base of the stalk. L10 forms an elongated spine to which L12 dimers bind in a sequential fashion forming a multimeric L10(L12)X complex. In terms of processing, one or more lysine residues are methylated.

Its function is as follows. Forms part of the ribosomal stalk which helps the ribosome interact with GTP-bound translation factors. This Mycobacterium ulcerans (strain Agy99) protein is Large ribosomal subunit protein uL11.